Consider the following 109-residue polypeptide: Fluoride-specific ion channel FluC 1 (109 aa).

3 helical membrane-spanning segments follow: residues 21 to 41 (FYFK…GFFI), 52 to 72 (ILFS…HFLY), and 83 to 103 (LFIY…IGFQ).

It belongs to the fluoride channel Fluc/FEX (TC 1.A.43) family.

It localises to the cell inner membrane. The enzyme catalyses fluoride(in) = fluoride(out). Functionally, fluoride-specific ion channel. Important for reducing fluoride concentration in the cell, thus reducing its toxicity. This is Fluoride-specific ion channel FluC 1 from Prochlorococcus marinus subsp. pastoris (strain CCMP1986 / NIES-2087 / MED4).